We begin with the raw amino-acid sequence, 245 residues long: NAD-dependent protein deacetylase (245 aa).

The Deacetylase sirtuin-type domain occupies 1–245 (MIFVQQFEEV…EFVEGLSSIK (245 aa)). NAD(+) is bound by residues A26, T30, F37, R38, Q105, I107, D108, and H123. F37 contributes to the nicotinamide binding site. I107 and D108 together coordinate nicotinamide. H123 acts as the Proton acceptor in catalysis. Zn(2+)-binding residues include C131, C134, C151, and C154. Residues T190, S191, N216, and I234 each contribute to the NAD(+) site.

Belongs to the sirtuin family. Class U subfamily. It depends on Zn(2+) as a cofactor.

The protein localises to the cytoplasm. The catalysed reaction is N(6)-acetyl-L-lysyl-[protein] + NAD(+) + H2O = 2''-O-acetyl-ADP-D-ribose + nicotinamide + L-lysyl-[protein]. Functionally, NAD-dependent protein deacetylase which modulates the activities of several enzymes which are inactive in their acetylated form. This Bacillus thuringiensis subsp. konkukian (strain 97-27) protein is NAD-dependent protein deacetylase.